A 903-amino-acid chain; its full sequence is Protein translocase subunit SecA (903 aa).

Residues glutamine 87, 105–109 (GEGKT), and aspartate 512 each bind ATP. The tract at residues 853-903 (KQQQLSHYEENALVTEDPNAPATAERKVGRNDPCPCGSGKKYKQCHGRLQS) is disordered. Cysteine 886, cysteine 888, cysteine 897, and histidine 898 together coordinate Zn(2+). Over residues 892–903 (KKYKQCHGRLQS) the composition is skewed to basic residues.

Belongs to the SecA family. As to quaternary structure, monomer and homodimer. Part of the essential Sec protein translocation apparatus which comprises SecA, SecYEG and auxiliary proteins SecDF-YajC and YidC. Zn(2+) serves as cofactor.

It localises to the cell inner membrane. Its subcellular location is the cytoplasm. It catalyses the reaction ATP + H2O + cellular proteinSide 1 = ADP + phosphate + cellular proteinSide 2.. In terms of biological role, part of the Sec protein translocase complex. Interacts with the SecYEG preprotein conducting channel. Has a central role in coupling the hydrolysis of ATP to the transfer of proteins into and across the cell membrane, serving both as a receptor for the preprotein-SecB complex and as an ATP-driven molecular motor driving the stepwise translocation of polypeptide chains across the membrane. In Serratia proteamaculans (strain 568), this protein is Protein translocase subunit SecA.